An 801-amino-acid polypeptide reads, in one-letter code: Zinc finger Y-chromosomal protein (801 aa).

Phosphoserine is present on Ser270. A C2H2-type 1 zinc finger spans residues 421 to 443; it reads YPCMICGKKFKSRGFLKRHMKNH. A C2H2-type 2; atypical zinc finger spans residues 452-474; sequence YHCTDCDYTTNKKISLHNHLESH. 11 consecutive C2H2-type zinc fingers follow at residues 484 to 506, 515 to 538, 544 to 566, 572 to 595, 601 to 623, 629 to 652, 658 to 680, 686 to 709, 715 to 737, 743 to 766, and 772 to 795; these read IECD…KMVH, HKCK…LAVH, HICV…MRIH, YQCQ…KTKH, FKCD…TLVH, HQCL…ISVH, HKCE…VAVH, HQCR…LSVH, FRCK…MKTH, YQCE…ISIH, and HRCE…MRHH.

This sequence belongs to the krueppel C2H2-type zinc-finger protein family. ZFX/ZFY subfamily.

The protein localises to the nucleus. Its function is as follows. Probable transcriptional activator. Binds to the consensus sequence 5'-AGGCCY-3'. The chain is Zinc finger Y-chromosomal protein (ZFY) from Homo sapiens (Human).